Here is a 127-residue protein sequence, read N- to C-terminus: EF-hand calcium-binding domain-containing protein 10 (127 aa).

The EF-hand domain maps to 63 to 98 (MDNSNIVAMFEMMDSSGRGTISFVQYKEALKTLGLC).

In Homo sapiens (Human), this protein is EF-hand calcium-binding domain-containing protein 10 (EFCAB10).